Reading from the N-terminus, the 104-residue chain is L-rhamnose mutarotase (104 aa).

Y18 provides a ligand contact to substrate. H22 (proton donor) is an active-site residue. Substrate-binding positions include Y41 and 76–77 (WW).

Belongs to the rhamnose mutarotase family. As to quaternary structure, homodimer.

Its subcellular location is the cytoplasm. It carries out the reaction alpha-L-rhamnose = beta-L-rhamnose. It participates in carbohydrate metabolism; L-rhamnose metabolism. Its function is as follows. Involved in the anomeric conversion of L-rhamnose. The chain is L-rhamnose mutarotase from Yersinia pseudotuberculosis serotype O:1b (strain IP 31758).